We begin with the raw amino-acid sequence, 417 residues long: Inactive cytochrome P450 76AD1 (417 aa).

The chain crosses the membrane as a helical span at residues 4-24; the sequence is ATLAMILAIWFISFHFIKLLF.

This sequence belongs to the cytochrome P450 family.

The protein resides in the membrane. It functions in the pathway pigment biosynthesis; betalain biosynthesis. Its function is as follows. Inactive cytochrome unable to convert L-DOPA to cyclo-DOPA in the betalain pathway and producing a yellow mutant phenotype. A frameshift replaces 108 amino acids of the active protein found in red beets (AC I3PFJ5) with 27 new residues followed by a stop codon. In Beta vulgaris (Sugar beet), this protein is Inactive cytochrome P450 76AD1.